The sequence spans 287 residues: UBX domain-containing protein 1 (287 aa).

The region spanning 1–42 is the UBA domain; it reads MAECSTLESLIEMGFSPSRAEKALAATGNQGIEPAMDWLVEH. A disordered region spans residues 44-207; that stretch reads DDPDIDEPSV…VQEPPTKKEY (164 aa). 2 stretches are compositionally biased toward basic and acidic residues: residues 72–114 and 129–169; these read CEER…EQEK and KIQE…ERAR. Residues 72 to 164 adopt a coiled-coil conformation; it reads CEERLPLTEE…RVREKIARDK (93 aa). A compositionally biased stretch (low complexity) spans 176-197; it reads SEPISPPAEASIPATTPSPSSP. A UBX domain is found at 205–284; sequence KEYDQCRIQV…GLVPSAVLIV (80 aa).

The protein resides in the cytoplasm. In terms of biological role, component of a complex required to couple deglycosylation and proteasome-mediated degradation of misfolded proteins in the endoplasmic reticulum that are retrotranslocated in the cytosol. Involved in ubiquitin-proteasome systems. The sequence is that of UBX domain-containing protein 1 (ubxn1) from Xenopus tropicalis (Western clawed frog).